A 493-amino-acid polypeptide reads, in one-letter code: Dipeptide permease D (493 aa).

Helical transmembrane passes span 14-34 (VVALQIWEYFSFYGMRALLIL), 49-69 (ELFSAYCSLVYVTPILGGYLA), 91-111 (LVLGASEIAPTFLYLSLAIIV), 138-158 (GGFSLLYAAGNIGSIVAPIAC), 167-187 (WAMGFALAAIGMLAGLVIFLC), 212-232 (NWGWLLILLVAAPLLITVLFW), 235-255 (WSVYALIVATAIGLVVLAKIY), 267-287 (LGLIVTLTLFSMLFWAFAQQG), 312-332 (MFQSVNAFAVMLCGVVLAWLV), 344-364 (IWGKFALGLGLMSAGFCILTL), 379-399 (LMVLGLAVMGFAELFIDPVAM), 413-433 (VLTGIYMLLSGAIANYLAGVI), and 458-478 (VFEQITWGALACVGVVLLIWL).

This sequence belongs to the major facilitator superfamily. Proton-dependent oligopeptide transporter (POT/PTR) (TC 2.A.17) family. DtpD subfamily.

The protein localises to the cell inner membrane. Probable proton-dependent permease that transports dipeptides. In Salmonella typhimurium (strain 14028s / SGSC 2262), this protein is Dipeptide permease D.